The following is a 253-amino-acid chain: MRVHAIEAFDDNYIWAIETNDKDKVIIVDPGEAQPVQQWLEQNSKSIETILVTHHHYDHTGGIAELIEQSPCPVIGPENPEIKTLTKTVTEGDELTVGGIQWQVLTTPGHTLDHISFYTPGFLFCGDTLFSGGCGRMFEGTPEQFTQSLLKLRKLPGETRVFCAHEYTQANVNFALKVEPENAVLQSYAEKVRMLREQEQITLPSTLQLELAINPFLRFDQKSVIAAANKHAESVKNSPEDVFYTIRQWKDNA.

The Zn(2+) site is built by histidine 54, histidine 56, aspartate 58, histidine 59, histidine 110, aspartate 127, and histidine 165.

The protein belongs to the metallo-beta-lactamase superfamily. Glyoxalase II family. In terms of assembly, monomer. Zn(2+) serves as cofactor.

The enzyme catalyses an S-(2-hydroxyacyl)glutathione + H2O = a 2-hydroxy carboxylate + glutathione + H(+). The protein operates within secondary metabolite metabolism; methylglyoxal degradation; (R)-lactate from methylglyoxal: step 2/2. Its function is as follows. Thiolesterase that catalyzes the hydrolysis of S-D-lactoyl-glutathione to form glutathione and D-lactic acid. This is Hydroxyacylglutathione hydrolase from Idiomarina loihiensis (strain ATCC BAA-735 / DSM 15497 / L2-TR).